The chain runs to 154 residues: Ascorbate-specific PTS system EIIA component (154 aa).

In terms of domain architecture, PTS EIIA type-2 spans 6 to 150; that stretch reads SLAENNSIRL…QEVLDLIDRT (145 aa). Catalysis depends on His-68, which acts as the Tele-phosphohistidine intermediate. Phosphohistidine is present on His-68.

The protein localises to the cytoplasm. In terms of biological role, the phosphoenolpyruvate-dependent sugar phosphotransferase system (sugar PTS), a major carbohydrate active transport system, catalyzes the phosphorylation of incoming sugar substrates concomitantly with their translocation across the cell membrane. The enzyme II UlaABC PTS system is involved in ascorbate transport. This is Ascorbate-specific PTS system EIIA component (ulaC) from Salmonella typhi.